A 354-amino-acid polypeptide reads, in one-letter code: Peptide chain release factor 1 (354 aa).

Gln-232 is modified (N5-methylglutamine).

The protein belongs to the prokaryotic/mitochondrial release factor family. Methylated by PrmC. Methylation increases the termination efficiency of RF1.

It is found in the cytoplasm. Functionally, peptide chain release factor 1 directs the termination of translation in response to the peptide chain termination codons UAG and UAA. The polypeptide is Peptide chain release factor 1 (Phytoplasma australiense).